The primary structure comprises 491 residues: Glutamyl-tRNA(Gln) amidotransferase subunit A (491 aa).

Residues lysine 79 and serine 154 each act as charge relay system in the active site. Serine 178 acts as the Acyl-ester intermediate in catalysis.

It belongs to the amidase family. GatA subfamily. In terms of assembly, heterotrimer of A, B and C subunits.

The catalysed reaction is L-glutamyl-tRNA(Gln) + L-glutamine + ATP + H2O = L-glutaminyl-tRNA(Gln) + L-glutamate + ADP + phosphate + H(+). Functionally, allows the formation of correctly charged Gln-tRNA(Gln) through the transamidation of misacylated Glu-tRNA(Gln) in organisms which lack glutaminyl-tRNA synthetase. The reaction takes place in the presence of glutamine and ATP through an activated gamma-phospho-Glu-tRNA(Gln). The sequence is that of Glutamyl-tRNA(Gln) amidotransferase subunit A from Alkaliphilus metalliredigens (strain QYMF).